A 190-amino-acid polypeptide reads, in one-letter code: Lipid A acyltransferase PagP (190 aa).

The first 18 residues, 1–18, serve as a signal peptide directing secretion; it reads MKRLISCLTIICALNASA. Residues His60, Asp103, and Ser104 contribute to the active site.

This sequence belongs to the lipid A palmitoyltransferase family. In terms of assembly, homodimer.

The protein localises to the cell outer membrane. It catalyses the reaction a lipid A + a 1,2-diacyl-sn-glycero-3-phosphocholine = a hepta-acyl lipid A + a 2-acyl-sn-glycero-3-phosphocholine. It carries out the reaction a lipid IVA + a 1,2-diacyl-sn-glycero-3-phosphocholine = a lipid IVB + a 2-acyl-sn-glycero-3-phosphocholine. The enzyme catalyses a lipid IIA + a 1,2-diacyl-sn-glycero-3-phosphocholine = a lipid IIB + a 2-acyl-sn-glycero-3-phosphocholine. In terms of biological role, transfers a fatty acid residue from the sn-1 position of a phospholipid to the N-linked hydroxyfatty acid chain on the proximal unit of lipid A or its precursors. The protein is Lipid A acyltransferase PagP of Legionella pneumophila serogroup 1 (strain 2300/99 Alcoy).